Reading from the N-terminus, the 609-residue chain is MSNVDPFLLYGTRETEAKPTHLKAGLLSLDLNDGNLRTITYDGVEVLRAVSYLVRDRDWGTYNPQIHDLNVEQSDSGFIVTYQARCEGPDATKLTIDVCIQAKSGGTLTFDAVANTATGFETNRCGFCILHPIVGVAGSPVRVEHVDGTLDRTQLPYLIEPWQPFKDMRAITHEAMPGVTAECRMEGDTFEMEDQRNWSDASYKTYVRPLALPWPYQIEASKPQHQRIVLNISDTRKAALQAGMNAEPVSITLGNTSGKLPNIGIIITPEEAKASLAAIDLLQEIDPQDLLFQYDPMAGHNGSAFADFATLAAKHSARVSLEIALPCEKSLIEETTAIASDMKAAGFNPDAVIVSPAIDRQSTPPGSEWPTCPPLEDVYAAARAAFPNARLGGGMLSYFTELNRKCVPGELVDFVTHCTNPIVHAADDLSVMQTLEALPFITRSVRAVYGDKPYRIGPSTIPMRQNPYGSRTMENPNGKRIAMANRDPRHNGKFAESFALAYAISVLNAGLDSLTLSALTGPFGLTAGEGEPTLAGGKRPLFTTIKTLSGLAGKDWWQLISSRPDHVLAFATEHEFWLVNITSQPQTVSIAQFAKITLDPYAVQNLKRS.

The enzyme catalyses D-apionolactone + H2O = D-apionate + H(+). It participates in carbohydrate metabolism. Functionally, involved in catabolism of D-apiose. Hydrolyzes D-apionolactone to D-apionate. In Brucella anthropi (strain ATCC 49188 / DSM 6882 / CCUG 24695 / JCM 21032 / LMG 3331 / NBRC 15819 / NCTC 12168 / Alc 37) (Ochrobactrum anthropi), this protein is D-apionate lactonase.